The primary structure comprises 366 residues: tRNA/tmRNA (uracil-C(5))-methyltransferase (366 aa).

S-adenosyl-L-methionine-binding residues include Q190, Y218, N223, E239, and D299. C324 serves as the catalytic Nucleophile. E358 (proton acceptor) is an active-site residue.

It belongs to the class I-like SAM-binding methyltransferase superfamily. RNA M5U methyltransferase family. TrmA subfamily.

The catalysed reaction is uridine(54) in tRNA + S-adenosyl-L-methionine = 5-methyluridine(54) in tRNA + S-adenosyl-L-homocysteine + H(+). The enzyme catalyses uridine(341) in tmRNA + S-adenosyl-L-methionine = 5-methyluridine(341) in tmRNA + S-adenosyl-L-homocysteine + H(+). Dual-specificity methyltransferase that catalyzes the formation of 5-methyluridine at position 54 (m5U54) in all tRNAs, and that of position 341 (m5U341) in tmRNA (transfer-mRNA). The sequence is that of tRNA/tmRNA (uracil-C(5))-methyltransferase from Escherichia coli O6:H1 (strain CFT073 / ATCC 700928 / UPEC).